We begin with the raw amino-acid sequence, 272 residues long: Acetylglutamate kinase (272 aa).

Residues 41-42 (GG), arginine 63, and asparagine 166 contribute to the substrate site.

This sequence belongs to the acetylglutamate kinase family. ArgB subfamily.

It is found in the cytoplasm. The catalysed reaction is N-acetyl-L-glutamate + ATP = N-acetyl-L-glutamyl 5-phosphate + ADP. It functions in the pathway amino-acid biosynthesis; L-arginine biosynthesis; N(2)-acetyl-L-ornithine from L-glutamate: step 2/4. Catalyzes the ATP-dependent phosphorylation of N-acetyl-L-glutamate. The polypeptide is Acetylglutamate kinase (Anaeromyxobacter sp. (strain K)).